A 146-amino-acid chain; its full sequence is Large ribosomal subunit protein uL15 (146 aa).

The disordered stretch occupies residues 1 to 54; that stretch reads MNLTDLRPADGSKQSGNFRRGRGHGSGNGKTAGKGHKGQKARSGAPRVGFEGGQ.

Belongs to the universal ribosomal protein uL15 family. As to quaternary structure, part of the 50S ribosomal subunit.

Its function is as follows. Binds to the 23S rRNA. This Lachnoclostridium phytofermentans (strain ATCC 700394 / DSM 18823 / ISDg) (Clostridium phytofermentans) protein is Large ribosomal subunit protein uL15.